Here is a 108-residue protein sequence, read N- to C-terminus: Urease subunit gamma (108 aa).

The protein belongs to the urease gamma subunit family. Heterotrimer of UreA (gamma), UreB (beta) and UreC (alpha) subunits. Three heterotrimers associate to form the active enzyme.

The protein localises to the cytoplasm. The enzyme catalyses urea + 2 H2O + H(+) = hydrogencarbonate + 2 NH4(+). It functions in the pathway nitrogen metabolism; urea degradation; CO(2) and NH(3) from urea (urease route): step 1/1. The protein is Urease subunit gamma of Haloquadratum walsbyi (strain DSM 16790 / HBSQ001).